A 310-amino-acid polypeptide reads, in one-letter code: Translocator protein BipD (310 aa).

Coiled-coil stretches lie at residues 127–171 and 250–299; these read DPIL…LQDY and DTAR…AIST.

The protein belongs to the invasin protein D family.

The protein resides in the secreted. Its function is as follows. Required for invasion of epithelial cells, as well as for survival within host cells, escape from endocytic vesicles and subsequent actin-tail formation. Probably regulates the secretion of effectors BipB and BipC and their final integration into the target cell membrane. This chain is Translocator protein BipD (bipD), found in Burkholderia pseudomallei (strain 1106a).